The following is a 154-amino-acid chain: Transcriptional repressor NrdR (154 aa).

Residues 3–34 (CPTCQYNGTRVVDSRPADDGNSIRRRRECEKC) fold into a zinc finger. The ATP-cone domain occupies 49–139 (LIVVKKDGAR…VYRQFKDISV (91 aa)).

This sequence belongs to the NrdR family. Requires Zn(2+) as cofactor.

Negatively regulates transcription of bacterial ribonucleotide reductase nrd genes and operons by binding to NrdR-boxes. This Listeria monocytogenes serotype 4a (strain HCC23) protein is Transcriptional repressor NrdR.